The following is a 159-amino-acid chain: NADH-quinone oxidoreductase subunit I (159 aa).

2 consecutive 4Fe-4S ferredoxin-type domains span residues 51–80 (RRYE…IEAD) and 90–119 (TRYD…EGPN). The [4Fe-4S] cluster site is built by C60, C63, C66, C70, C99, C102, C105, and C109.

It belongs to the complex I 23 kDa subunit family. As to quaternary structure, NDH-1 is composed of 14 different subunits. Subunits NuoA, H, J, K, L, M, N constitute the membrane sector of the complex. [4Fe-4S] cluster serves as cofactor.

The protein resides in the cell inner membrane. The catalysed reaction is a quinone + NADH + 5 H(+)(in) = a quinol + NAD(+) + 4 H(+)(out). In terms of biological role, NDH-1 shuttles electrons from NADH, via FMN and iron-sulfur (Fe-S) centers, to quinones in the respiratory chain. The immediate electron acceptor for the enzyme in this species is believed to be ubiquinone. Couples the redox reaction to proton translocation (for every two electrons transferred, four hydrogen ions are translocated across the cytoplasmic membrane), and thus conserves the redox energy in a proton gradient. The protein is NADH-quinone oxidoreductase subunit I of Rickettsia bellii (strain OSU 85-389).